The following is a 1604-amino-acid chain: MSLQNSHSKKYVLTFFMSTCLLTSSFLSTSARAASFTQLANQIPTLSGLSEVQRKQKWNSYTLQEKQEAWRRAKLTPDFVQAMIDMQTGFTESDLSSRNNKTRHKAREKKSELDLYIAGTKQGFKEKVDGYISQGKIPTPEEAAQNLEIDYDAKKTDNKLEKNQNVRRVEKDKKALLDLYIHSITTSVKEKEYITTGQVPELGELEKALNISKEEAKHRRTIIRDQVMANERPKLVRSGTVLTKKELHKRFGKDTTTDDTKYIDDITTEVMYTKKQGYVNTDFLPKISEIMNEFKVDKGRANLYLNQIKAGIEAKLLADNNQTTTKPFTKHSRTTTNTAGISSGVPFDTGRTKPETKSFDFKRSMYSLLNRKQEDQLSKTEQHLKQQIKLEENKEEFKEILTKNPIDALLFAEQSNLGNSFKQEAISNIDLSKDISRILFTVDDKGNRTILNTILTTTPEHKDELIKQAQHHAIQTLPTSISDKDVSDKKKLTLATLAATEDKKVLEEALDNWLSTNGYKRKPEVESLISILLSDETTLKAGIDKIFELPVENNVNNNSNKGQNGTPILPPTPPLNGSMPPSPPPPLLNGTPTSTAFNNSNPNHKFDLKNFEATYPRLYKSYNEFIQNTTSASQSQATTTSNNIPDTKAKMGESLELLKQKVAKQNEVIGLIHNEVTKLYNFSPKTFVNLFNTENEEIIKKIEQIAKREDIQKILQDNDIKITSTFVSKIFNESLEQTKQRLRSSNIINAKQYKRIEQYANKQECVTEFLRITNPLEQLKFANKYINILGQSTFNGKLNELIENPNKLTFSQKINFVLQGYQELTREIPTAKANLNKLKQNILEKIEIQQLIANKDISRKDLLDILNNKNPELLKSLLEAKVILEENKLNNSANEVDLKEIIPSLNYLTSEQLTSLINRITIEGVKTALKAKWQQENKTVSNNTEKPLIYNNGTPMPPPIPNGNSNFGTNDYLISMGYTQEFIDRMDKVKPNNNFGKNHNYTATDFKSNVGKNYYESTSKLGGTDILLTDSQKLENAIKKEVLAKYIEEPNRDMQDDSLLKQAFEEKFYYAEDKNTKVIPKPSEVNFDPNFIGPRTEVGQEIYELYEQELLKLARDPVFIEYVKNNNNTQKDERELLISFIEQIESKRPELEQKYGSDVQSEDNNQEKKVGHLNMKQFQSLFQQENESANDESSTKDDPQPEDSNKKSEKSDSETALSPRLLSSNDSKNDKSSDDKKSLLVLRSSEEESKKDIALESEDEAIDMSFKTEAIAEQDEATQRQQVSDDTNRKVAILVKATSTLHKPVHYNILSDRLKVAAIGAGDEEASINRGVWISGLYGINKQGTWKNIPKYQGRTTGVTIGADAEFINSHDVIGIAYSRLEFQIKYNKKLEKTAVNGHLLSIYGLKELIKGFSLQAITSYGHNYIKNKSKSINNIIGKYQNNNLSFQTLLNYKYRTKYDLHFIPNIGFKYDYSRASNYKEYNVDIENLMNQKKSNQSFESSIGGKIVFKPIATVNNIILTPSLYGNIERHFNNKNTKVNAKATFKGQTLQETIIIPKQPKLGYNIGSNILMSKKNINVLLEYNYYTHRKYQSHQGLIKLKVNL.

Positions 1–33 (MSLQNSHSKKYVLTFFMSTCLLTSSFLSTSARA) are cleaved as a signal peptide. Disordered stretches follow at residues 324–354 (TTKPFTKHSRTTTNTAGISSGVPFDTGRTKP), 554–603 (NVNN…SNPN), and 1183–1240 (QQEN…KSLL). The span at 554 to 564 (NVNNNSNKGQN) shows a compositional bias: low complexity. Pro residues predominate over residues 568–587 (ILPPTPPLNGSMPPSPPPPL). Basic and acidic residues-rich tracts occupy residues 1193–1213 (SSTKDDPQPEDSNKKSEKSDS) and 1227–1240 (SKNDKSSDDKKSLL). Residues 1325–1604 (EASINRGVWI…QGLIKLKVNL (280 aa)) form the Autotransporter domain.

It is found in the cell outer membrane. This chain is Putative surface cell antigen sca2 (sca2), found in Rickettsia felis (strain ATCC VR-1525 / URRWXCal2) (Rickettsia azadi).